The following is a 94-amino-acid chain: Venom peptide SjAPI (94 aa).

The first 24 residues, 1–24, serve as a signal peptide directing secretion; sequence MKWGALLCIFGFLAFCSVLDRGLG. Residues 25-30 constitute a propeptide that is removed on maturation; sequence WIPDIW. 5 disulfide bridges follow: cysteine 33–cysteine 70, cysteine 43–cysteine 66, cysteine 47–cysteine 62, cysteine 51–cysteine 92, and cysteine 72–cysteine 86. One can recognise a TIL domain in the interval 33–92; sequence CSSKNEEFQQCGSSCPETCANHKNPEPKSCAAVCFVGCVCKPGFIRDDLKGSICVKPEDC. Residues 63-65 form a protease binding loop region; that stretch reads AAV.

The protein belongs to the serine protease inhibitor-like (TIL domain-containing) family. As to expression, expressed by the venom gland.

Its subcellular location is the secreted. Its function is as follows. Recombinant protein inhibits both alpha-chymotrypsin (Ki=97.1 nM) and elastase (Ki=3700 nM). This chain is Venom peptide SjAPI, found in Scorpiops jendeki (Scorpion).